A 476-amino-acid polypeptide reads, in one-letter code: Proline--tRNA ligase 2 (476 aa).

It belongs to the class-II aminoacyl-tRNA synthetase family. ProS type 3 subfamily. As to quaternary structure, homodimer.

It is found in the cytoplasm. It carries out the reaction tRNA(Pro) + L-proline + ATP = L-prolyl-tRNA(Pro) + AMP + diphosphate. Functionally, catalyzes the attachment of proline to tRNA(Pro) in a two-step reaction: proline is first activated by ATP to form Pro-AMP and then transferred to the acceptor end of tRNA(Pro). This is Proline--tRNA ligase 2 from Bacillus thuringiensis (strain Al Hakam).